The following is a 97-amino-acid chain: Co-chaperonin GroES (97 aa).

Belongs to the GroES chaperonin family. In terms of assembly, heptamer of 7 subunits arranged in a ring. Interacts with the chaperonin GroEL.

The protein localises to the cytoplasm. Functionally, together with the chaperonin GroEL, plays an essential role in assisting protein folding. The GroEL-GroES system forms a nano-cage that allows encapsulation of the non-native substrate proteins and provides a physical environment optimized to promote and accelerate protein folding. GroES binds to the apical surface of the GroEL ring, thereby capping the opening of the GroEL channel. This chain is Co-chaperonin GroES, found in Burkholderia vietnamiensis.